An 847-amino-acid polypeptide reads, in one-letter code: Phenylalanine--tRNA ligase beta subunit (847 aa).

The 129-residue stretch at phenylalanine 40–valine 168 folds into the tRNA-binding domain. The region spanning alanine 426 to serine 501 is the B5 domain. 4 residues coordinate Mg(2+): aspartate 479, aspartate 485, glutamate 488, and glutamate 489. Residues alanine 753–arginine 846 form the FDX-ACB domain.

The protein belongs to the phenylalanyl-tRNA synthetase beta subunit family. Type 1 subfamily. Tetramer of two alpha and two beta subunits. Requires Mg(2+) as cofactor.

Its subcellular location is the cytoplasm. The catalysed reaction is tRNA(Phe) + L-phenylalanine + ATP = L-phenylalanyl-tRNA(Phe) + AMP + diphosphate + H(+). In Leifsonia xyli subsp. xyli (strain CTCB07), this protein is Phenylalanine--tRNA ligase beta subunit.